The chain runs to 66 residues: Large ribosomal subunit protein bL33c (66 aa).

This sequence belongs to the bacterial ribosomal protein bL33 family.

The protein localises to the plastid. Its subcellular location is the chloroplast. The sequence is that of Large ribosomal subunit protein bL33c from Lotus japonicus (Lotus corniculatus var. japonicus).